The primary structure comprises 1169 residues: Transcription-repair-coupling factor (1169 aa).

One can recognise a Helicase ATP-binding domain in the interval 634–795 (DMERERPMDR…MLGVRDLSVI (162 aa)). An ATP-binding site is contributed by 647-654 (GDVGYGKT). Residues 748-751 (DEEQ) carry the DEEQ box motif. A Helicase C-terminal domain is found at 809 to 970 (VLEQNSNFIK…GFKIAMRDLN (162 aa)).

In the N-terminal section; belongs to the UvrB family. This sequence in the C-terminal section; belongs to the helicase family. RecG subfamily.

Its subcellular location is the cytoplasm. Its function is as follows. Couples transcription and DNA repair by recognizing RNA polymerase (RNAP) stalled at DNA lesions. Mediates ATP-dependent release of RNAP and its truncated transcript from the DNA, and recruitment of nucleotide excision repair machinery to the damaged site. The chain is Transcription-repair-coupling factor from Staphylococcus haemolyticus (strain JCSC1435).